Here is a 147-residue protein sequence, read N- to C-terminus: MVHFTPEEKCIISKQWGQVNIDETGGEALGRLLVVYPWTQRFFDNFGNLSSSSAIMGNPKVKAHGKKVLTSFGDAIKNMDNLKGAFAKLSELHCDKLHVDPENFKLLGNVLLIVLATHFGKEFTPEVQAAWQKLVSGVAIALAHKYH.

In terms of domain architecture, Globin spans His3–His147. Position 51 is a phosphoserine (Ser51). Heme b-binding residues include His64 and His93.

This sequence belongs to the globin family. Red blood cells.

Hemoglobin epsilon chain is a beta-type chain found in early embryos. This Oryctolagus cuniculus (Rabbit) protein is Hemoglobin subunit epsilon (HBE1).